A 663-amino-acid polypeptide reads, in one-letter code: tRNA (guanine(26)-N(2))-dimethyltransferase (663 aa).

The transit peptide at 1 to 16 (MSLARTILWLSRPLRP) directs the protein to the mitochondrion. One can recognise a Trm1 methyltransferase domain in the interval 56–498 (ATVTEGAAKI…APPEALWDIM (443 aa)). R83 lines the S-adenosyl-L-methionine pocket. S121 is subject to Phosphoserine. S-adenosyl-L-methionine-binding residues include R165 and D183. Zn(2+) is bound by residues C347, C350, C383, and C386. S516 bears the Phosphoserine mark. Residues 534–574 (IREDANPSSRQRGLKRFQANPEANWGPRPRARPGGKAASED) are disordered. The short motif at 540-572 (PSSRQRGLKRFQANPEANWGPRPRARPGGKAAS) is the Nuclear localization signal element. The C3H1-type zinc-finger motif lies at 599 to 626 (RLKTFPCKRFKEGTCQLGDQCCYSHSPA). The residue at position 624 (S624) is a Phosphoserine. The tract at residues 632–663 (GDIPIEECPETTTKISPGPKAAAGGIPGPGVD) is disordered.

Belongs to the class I-like SAM-binding methyltransferase superfamily. Trm1 family.

The protein resides in the mitochondrion. It is found in the nucleus. Its subcellular location is the cytoplasm. It carries out the reaction guanosine(26) in tRNA + 2 S-adenosyl-L-methionine = N(2)-dimethylguanosine(26) in tRNA + 2 S-adenosyl-L-homocysteine + 2 H(+). In terms of biological role, dimethylates a single guanine residue at position 26 of most nuclear- and mitochondrial-encoded tRNAs using S-adenosyl-L-methionine as donor of the methyl groups. tRNA guanine(26)-dimethylation is required for redox homeostasis and ensure proper cellular proliferation and oxidative stress survival. The polypeptide is tRNA (guanine(26)-N(2))-dimethyltransferase (Mus musculus (Mouse)).